We begin with the raw amino-acid sequence, 637 residues long: Transcription termination factor FttA (637 aa).

The segment at 4–71 is KHa; that stretch reads EDVLLDLKHK…IAMRPDPRVL (68 aa). The KHb stretch occupies residues 72–139; the sequence is ATPEDSISII…WIPKVVRTPP (68 aa). The tract at residues 180–383 is metallo-beta-lactamase N-terminus; it reads WVRVTALGGC…VISEATYGNA (204 aa). Residues His-242, His-244, Asp-246, His-247, His-329, and Asp-352 each coordinate Zn(2+). The beta-Casp stretch occupies residues 384-578; it reads NAFQPALKDA…MEVQVVDGFS (195 aa). Residues 579–637 form a metallo-beta-lactamase C-terminus region; that stretch reads GHSDRRQLMEYVKRMQPRPERVFTEHGDEKACVDLASSVYKKLKIETRALTNLETVRLL. His-604 lines the Zn(2+) pocket.

It belongs to the metallo-beta-lactamase superfamily. RNA-metabolizing metallo-beta-lactamase-like family. FttA subfamily. Homodimer. Interacts with RNA polymerase (RNAP), interacts with the Spt4-Spt5 complex. Zn(2+) serves as cofactor.

Its function is as follows. Terminates transcription on the whole genome. Termination is linked to FttA-mediated RNA cleavage and does not require NTP hydrolysis. Cleaves endonucleolytically at the RNA exit channel of RNA polymerase (RNAP); the 5'-3' exonuclease activity of this protein degrades the nascent RNA released from RNAP. The chain is Transcription termination factor FttA from Methanosarcina mazei (strain ATCC BAA-159 / DSM 3647 / Goe1 / Go1 / JCM 11833 / OCM 88) (Methanosarcina frisia).